The sequence spans 212 residues: Cyclin-dependent kinase inhibitor 3 (212 aa).

The interval 1 to 24 (MKPPISIQASEFDSSDEEPADDEQ) is disordered. Positions 1 to 34 (MKPPISIQASEFDSSDEEPADDEQTPIQISWLPL) are interaction with CDK2. The segment covering 13–24 (DSSDEEPADDEQ) has biased composition (acidic residues). The 170-residue stretch at 32 to 201 (LPLSRVNCSQ…FRDKLAAYLS (170 aa)) folds into the Tyrosine-protein phosphatase domain. The active-site Phosphocysteine intermediate is the cysteine 140.

Belongs to the protein-tyrosine phosphatase family. In terms of assembly, interacts with cyclin-dependent kinases such as CDK1, CDK2 and CDK3. Does not interact with CDK4. Interacts (via C-terminus) with phosphorylated CDK2 (via C-terminal helix). Interacts with MS4A3 (via C-terminus); the interaction enhances CDKN3 enzymatic activity.

The protein localises to the cytoplasm. It is found in the perinuclear region. It catalyses the reaction O-phospho-L-tyrosyl-[protein] + H2O = L-tyrosyl-[protein] + phosphate. The enzyme catalyses O-phospho-L-seryl-[protein] + H2O = L-seryl-[protein] + phosphate. It carries out the reaction O-phospho-L-threonyl-[protein] + H2O = L-threonyl-[protein] + phosphate. Its function is as follows. May play a role in cell cycle regulation. Dual specificity phosphatase active toward substrates containing either phosphotyrosine or phosphoserine residues. Dephosphorylates CDK2 at 'Thr-160' in a cyclin-dependent manner. The chain is Cyclin-dependent kinase inhibitor 3 from Rattus norvegicus (Rat).